We begin with the raw amino-acid sequence, 219 residues long: Elongation factor Ts (219 aa).

The tract at residues 82 to 85 (TDFV) is involved in Mg(2+) ion dislocation from EF-Tu.

This sequence belongs to the EF-Ts family.

It is found in the cytoplasm. Functionally, associates with the EF-Tu.GDP complex and induces the exchange of GDP to GTP. It remains bound to the aminoacyl-tRNA.EF-Tu.GTP complex up to the GTP hydrolysis stage on the ribosome. In Synechococcus sp. (strain CC9902), this protein is Elongation factor Ts.